We begin with the raw amino-acid sequence, 464 residues long: Serine carboxypeptidase-like 22 (464 aa).

Residues 1–22 (MARTHLLFLLFVLLSLATSSTS) form the signal peptide. N-linked (GlcNAc...) asparagine glycosylation is found at Asn52, Asn113, and Asn137. Cystine bridges form between Cys86-Cys346, Cys247-Cys258, and Cys282-Cys314. Residue Ser179 is part of the active site. N-linked (GlcNAc...) asparagine glycosylation is found at Asn290 and Asn335. Active-site residues include Asp385 and His437.

Belongs to the peptidase S10 family. In terms of tissue distribution, expression not detected.

It localises to the secreted. Probable carboxypeptidase. The sequence is that of Serine carboxypeptidase-like 22 (SCPL22) from Arabidopsis thaliana (Mouse-ear cress).